Consider the following 451-residue polypeptide: Bifunctional protein GlmU (451 aa).

The interval 1 to 236 (MDQTPSYSPP…YEELRGINSK (236 aa)) is pyrophosphorylase. Residues 17 to 20 (LAAG), K31, Q79, 84 to 85 (GT), 105 to 107 (YGD), G144, E162, N177, and N234 each bind UDP-N-acetyl-alpha-D-glucosamine. D107 provides a ligand contact to Mg(2+). Mg(2+) is bound at residue N234. The interval 237–257 (VELAEAEATVQIVLRRKALEN) is linker. Residues 258–451 (GVTMTAPETV…EIRRQLKGSV (194 aa)) form an N-acetyltransferase region. UDP-N-acetyl-alpha-D-glucosamine contacts are provided by R323 and K341. Catalysis depends on H353, which acts as the Proton acceptor. UDP-N-acetyl-alpha-D-glucosamine contacts are provided by Y356 and N367. Residues A370, 376-377 (NY), S395, A413, and R430 each bind acetyl-CoA.

In the N-terminal section; belongs to the N-acetylglucosamine-1-phosphate uridyltransferase family. It in the C-terminal section; belongs to the transferase hexapeptide repeat family. In terms of assembly, homotrimer. The cofactor is Mg(2+).

It localises to the cytoplasm. The catalysed reaction is alpha-D-glucosamine 1-phosphate + acetyl-CoA = N-acetyl-alpha-D-glucosamine 1-phosphate + CoA + H(+). It catalyses the reaction N-acetyl-alpha-D-glucosamine 1-phosphate + UTP + H(+) = UDP-N-acetyl-alpha-D-glucosamine + diphosphate. It functions in the pathway nucleotide-sugar biosynthesis; UDP-N-acetyl-alpha-D-glucosamine biosynthesis; N-acetyl-alpha-D-glucosamine 1-phosphate from alpha-D-glucosamine 6-phosphate (route II): step 2/2. The protein operates within nucleotide-sugar biosynthesis; UDP-N-acetyl-alpha-D-glucosamine biosynthesis; UDP-N-acetyl-alpha-D-glucosamine from N-acetyl-alpha-D-glucosamine 1-phosphate: step 1/1. It participates in bacterial outer membrane biogenesis; LPS lipid A biosynthesis. In terms of biological role, catalyzes the last two sequential reactions in the de novo biosynthetic pathway for UDP-N-acetylglucosamine (UDP-GlcNAc). The C-terminal domain catalyzes the transfer of acetyl group from acetyl coenzyme A to glucosamine-1-phosphate (GlcN-1-P) to produce N-acetylglucosamine-1-phosphate (GlcNAc-1-P), which is converted into UDP-GlcNAc by the transfer of uridine 5-monophosphate (from uridine 5-triphosphate), a reaction catalyzed by the N-terminal domain. The polypeptide is Bifunctional protein GlmU (Granulibacter bethesdensis (strain ATCC BAA-1260 / CGDNIH1)).